The following is a 590-amino-acid chain: Phenylalanine--tRNA ligase beta subunit (590 aa).

Residues 276–382 (MELDVWDVPV…IMYNYDRFEP (107 aa)) form the B5 domain. Mg(2+)-binding residues include N360, D366, E369, and D370.

This sequence belongs to the phenylalanyl-tRNA synthetase beta subunit family. Type 2 subfamily. Tetramer of two alpha and two beta subunits. Requires Mg(2+) as cofactor.

The protein localises to the cytoplasm. The catalysed reaction is tRNA(Phe) + L-phenylalanine + ATP = L-phenylalanyl-tRNA(Phe) + AMP + diphosphate + H(+). The sequence is that of Phenylalanine--tRNA ligase beta subunit from Methanopyrus kandleri (strain AV19 / DSM 6324 / JCM 9639 / NBRC 100938).